The following is a 927-amino-acid chain: UPF0182 protein bll7333 (927 aa).

7 helical membrane-spanning segments follow: residues 17 to 37 (AVVGLIIAALVIAIVLTLLAL), 65 to 85 (AVVFLAVWTATAVILLLNGWL), 134 to 154 (LALLVAAAEAGNWGVFLQFVY), 185 to 205 (WMMLALALSALFAAAIYLVHG), 220 to 240 (VIAHGSALLGLLFAVKAWSFG), 264 to 284 (VGLPALWLMIGLSGIAALAAW), and 297 to 317 (AAFLLVAIGSFVLSGLVPVLF).

It belongs to the UPF0182 family.

Its subcellular location is the cell membrane. The polypeptide is UPF0182 protein bll7333 (Bradyrhizobium diazoefficiens (strain JCM 10833 / BCRC 13528 / IAM 13628 / NBRC 14792 / USDA 110)).